We begin with the raw amino-acid sequence, 502 residues long: DnaJ homolog subfamily C member 3 homolog (502 aa).

The N-terminal stretch at 1–25 (MIVNKKYFLLICIIILISINCLVLA) is a signal peptide. TPR repeat units follow at residues 29–62 (IENF…IGSD), 69–102 (VSLL…NPDN), 103–136 (IHAR…RPDN), 184–217 (KEVR…EPSS), 218–251 (VAAL…DPDN), 264–297 (FEKS…EPNS), 302–335 (TPLY…DELN), and 336–369 (ADAL…KPND). Residue Asn-51 is glycosylated (N-linked (GlcNAc...) asparagine). A disulfide bond links Cys-309 and Cys-325. Residues 390–457 (DYYKILGIQK…EKRKRYDMGE (68 aa)) enclose the J domain.

It localises to the secreted. Its subcellular location is the endoplasmic reticulum lumen. May be involved in the unfolded protein response (UPR) during ER stress. The sequence is that of DnaJ homolog subfamily C member 3 homolog (dnajc3) from Dictyostelium discoideum (Social amoeba).